Here is a 160-residue protein sequence, read N- to C-terminus: Single-stranded DNA-binding protein 3 (160 aa).

Residues 2-104 form the SSB domain; sequence MNRVVLVGRL…IVAESVQFLE (103 aa). The segment covering 106-133 has biased composition (polar residues); that stretch reads KQNGAGGSTSNNNQSETNYSNDNKTSSY. The disordered stretch occupies residues 106–160; the sequence is KQNGAGGSTSNNNQSETNYSNDNKTSSYRADRSQNGDSFANEGAPVDINPDDLPF.

Homotetramer.

This Listeria innocua serovar 6a (strain ATCC BAA-680 / CLIP 11262) protein is Single-stranded DNA-binding protein 3 (ssb3).